The following is a 408-amino-acid chain: Retron Ec48 reverse transcriptase (408 aa).

One can recognise a Reverse transcriptase domain in the interval 43-269 (EELKAIAELP…EPIKVHGLRV (227 aa)). Residues aspartate 137, aspartate 216, and aspartate 217 each contribute to the Mg(2+) site.

The protein belongs to the bacterial reverse transcriptase family.

It carries out the reaction DNA(n) + a 2'-deoxyribonucleoside 5'-triphosphate = DNA(n+1) + diphosphate. In terms of biological role, reverse transcriptase (RT) component of antiviral defense system retron Ec48, composed of a non-coding RNA (ncRNA), this reverse transcriptase (RT) and the following membrane protein. Expression of this retron confers protection against bacteriophages lambda, T2, T4, T5 and T7. At multiplicity of infection (MOI) of 0.02 cultures grow normally when infected with lambda without collapsing, at MOI 2 cultures enter growth stasis. At MOI 3 cell membranes are permeabilized within 15 minutes of infection but do not lyse, suggesting the phage are not able to finish a replication cycle. Antiviral defense is suppressed by mutations that knockout the lambda gam expression or phage T7 gp5.9 expression; both viral genes inhibit host RecBCD. The Ec48 retron may sense the integrity of the RecBCD enzyme; when RecBCD is perturbed by viral proteins the Ec48 effector (the membrane protein) is activated, leading to abortive infection and bacterial growth arrest. Responsible for synthesis of msDNA-Ec48 (a branched molecule with RNA linked by a 2',5'-phosphodiester bond to ssDNA). The retron transcript serves as primer (from a conserved internal G residue) and template for the reaction, and codes for the RT. The chain is Retron Ec48 reverse transcriptase from Escherichia coli.